The primary structure comprises 53 residues: Large ribosomal subunit protein bL32c (53 aa).

A disordered region spans residues 1 to 21 (MAVPKKRTSKSKKKSRRSHWI).

This sequence belongs to the bacterial ribosomal protein bL32 family.

The protein localises to the plastid. It is found in the chloroplast. The chain is Large ribosomal subunit protein bL32c (rpl32) from Cyanidium caldarium (Red alga).